Reading from the N-terminus, the 255-residue chain is Ribonuclease PH (255 aa).

Residues R86 and 124–126 (GTR) each bind phosphate.

This sequence belongs to the RNase PH family. In terms of assembly, homohexameric ring arranged as a trimer of dimers.

The enzyme catalyses tRNA(n+1) + phosphate = tRNA(n) + a ribonucleoside 5'-diphosphate. Phosphorolytic 3'-5' exoribonuclease that plays an important role in tRNA 3'-end maturation. Removes nucleotide residues following the 3'-CCA terminus of tRNAs; can also add nucleotides to the ends of RNA molecules by using nucleoside diphosphates as substrates, but this may not be physiologically important. Probably plays a role in initiation of 16S rRNA degradation (leading to ribosome degradation) during starvation. This is Ribonuclease PH from Geobacillus thermodenitrificans (strain NG80-2).